The following is a 383-amino-acid chain: NAD(P) transhydrogenase subunit alpha part 1 (383 aa).

NAD(+) is bound by residues 131–134, Val181, 201–203, and Gly231; these read QNMD and DVR.

This sequence belongs to the AlaDH/PNT family. As to quaternary structure, heterotrimer of two alpha chains and a beta (PntB) chain; in Rickettsia, the alpha chain is made of two subunits (PntAA and PntAB) and forms a dimer.

It carries out the reaction NAD(+) + NADPH + H(+)(in) = NADH + NADP(+) + H(+)(out). Its function is as follows. The transhydrogenation between NADH and NADP is coupled to respiration and ATP hydrolysis and functions as a proton pump across the membrane. This Rickettsia prowazekii (strain Madrid E) protein is NAD(P) transhydrogenase subunit alpha part 1 (pntAA).